Here is a 255-residue protein sequence, read N- to C-terminus: MGESARAAETSELGPLRRVVLKLSGESLAGNGGYGIDPGSLEVSVEQVLEAVEAGAELAIVVGGGNIFRGAQVADELGIESATADYMSMLGTVINALALQAALERRGVPTRVQSAIEIKEVAEPYIRRRAIRHLEKGRVVIFASGTGNPFFTTDTGAALRALEINADALLMAKNRVDGIYDKDPRVHGDARIVPRLDYMELLSRNLAVMDHTAATLCSGEGLPIIVFDILKSGNLRRILQGEKVGSLVWREPPER.

Residue 22 to 25 (KLSG) coordinates ATP. The segment at 30 to 35 (GNGGYG) is involved in allosteric activation by GTP. Glycine 64 is a binding site for UMP. 2 residues coordinate ATP: glycine 65 and arginine 69. UMP contacts are provided by residues aspartate 85 and 146–153 (TGNPFFTT). Residues asparagine 174, tyrosine 180, and aspartate 183 each contribute to the ATP site.

This sequence belongs to the UMP kinase family. As to quaternary structure, homohexamer.

It localises to the cytoplasm. It catalyses the reaction UMP + ATP = UDP + ADP. It participates in pyrimidine metabolism; CTP biosynthesis via de novo pathway; UDP from UMP (UMPK route): step 1/1. With respect to regulation, allosterically activated by GTP. Inhibited by UTP. Catalyzes the reversible phosphorylation of UMP to UDP. This Rubrobacter xylanophilus (strain DSM 9941 / JCM 11954 / NBRC 16129 / PRD-1) protein is Uridylate kinase.